A 1509-amino-acid polypeptide reads, in one-letter code: Myosin-2 heavy chain, non muscle (1509 aa).

Residues 32–85 (SDKTLAWWPTKDADRAFCHVEVTKDDGKNFTVRLENGEEKSQPKNEKNFLGVNP) form the Myosin N-terminal SH3-like domain. In terms of domain architecture, Myosin motor spans 89 to 787 (DGVEDMGELG…QLAAIEELRE (699 aa)). Residue Lys133 is modified to N6,N6,N6-trimethyllysine. Position 182–189 (182–189 (GESGAGKT)) interacts with ATP. The segment at 623 to 643 (APAEEEKAAAGGSRNRSTGRG) is disordered. Actin-binding stretches follow at residues 660–682 (LAHL…IPNL) and 766–780 (RFGV…GQLA). An IQ domain is found at 790–819 (ISKMVVSIQAGARAFLARRMYDKMREQTVS). The segment at 848–1226 (LISQRNFQKE…AERDSGAQQR (379 aa)) is alpha-helical tailpiece (S2). Residues 848 to 1509 (LISQRNFQKE…VRAGSARAEE (662 aa)) adopt a coiled-coil conformation. 5 stretches are compositionally biased toward basic and acidic residues: residues 958-1019 (ELKA…KDAL), 1034-1047 (KNTE…RNEL), 1097-1107 (EDARSEVDSLK), 1115-1141 (KSLK…RANV), and 1179-1189 (QVDETKRRLEE). 6 disordered regions span residues 958–1049 (ELKA…ELDD), 1068–1141 (LAQT…RANV), 1170–1195 (AAQA…ASAA), 1213–1259 (ADLD…RLEG), 1352–1425 (VAKE…NREL), and 1474–1509 (QLQD…RAEE). Positions 1227-1252 (RKLNTRISELQSELENAPKTGGASSE) are hinge. Polar residues predominate over residues 1231-1240 (TRISELQSEL). Residues 1253 to 1482 (EVKRLEGELE…AQLQDEIDGT (230 aa)) are alpha-helical tailpiece (LMM). A light meromyosin (LMM) region spans residues 1253-1509 (EVKRLEGELE…VRAGSARAEE (257 aa)). A nonhelical tailpiece region spans residues 1483 to 1509 (PSSRGGSTRGASARGASVRAGSARAEE). Positions 1484-1509 (SSRGGSTRGASARGASVRAGSARAEE) are enriched in low complexity. Residues Ser1489, Ser1494, and Ser1499 each carry the phosphoserine modification.

Belongs to the TRAFAC class myosin-kinesin ATPase superfamily. Myosin family. As to quaternary structure, myosin II heavy chain is two-headed. It self-assembles into filaments. Hexamer of 2 heavy chain subunits (MHC), 2 alkali light chain subunits (MLC) and 2 regulatory light chain subunits (MLC-2).

Myosin is a protein that binds to F-actin and has ATPase activity that is activated by F-actin. This Acanthamoeba castellanii (Amoeba) protein is Myosin-2 heavy chain, non muscle.